Here is a 308-residue protein sequence, read N- to C-terminus: HTH-type transcriptional activator AllS (308 aa).

The 58-residue stretch at 2–59 (FDPETLRTFIAVAETGSFSKAAERLCKTTATISYRIKLLEENTGVALFFRTTRSVTLT) folds into the HTH lysR-type domain. The segment at residues 19-38 (FSKAAERLCKTTATISYRIK) is a DNA-binding region (H-T-H motif).

This sequence belongs to the LysR transcriptional regulatory family.

In terms of biological role, positive regulator essential for the expression of allD operon. Binds to the allD promoter. The sequence is that of HTH-type transcriptional activator AllS (allS) from Escherichia coli O1:K1 / APEC.